Consider the following 216-residue polypeptide: MENQLLVRRLGRQDYTPVWQAMHQFTDQRDSTTRDEVWLVEHNPVFTQGQAGKAEHLLNTGDIPVVQSDRGGQVTYHGPGQLVAYFLIDLRRKKLGVRELVTHIENLVIHTLKHYQIESAARPDAPGVYVQNRKICSLGLRIRKGCSFHGLALNIQMDLAPFLRINPCGYAGMEMIQLSDLHPVSMEQVEKVLIQELVTLLDYEQVEFSTEAYNHE.

In terms of domain architecture, BPL/LPL catalytic spans 31–205 (STTRDEVWLV…ELVTLLDYEQ (175 aa)). Substrate-binding positions include 70-77 (RGGQVTYH), 137-139 (SLG), and 150-152 (GLA). C168 (acyl-thioester intermediate) is an active-site residue.

The protein belongs to the LipB family.

It localises to the cytoplasm. The enzyme catalyses octanoyl-[ACP] + L-lysyl-[protein] = N(6)-octanoyl-L-lysyl-[protein] + holo-[ACP] + H(+). The protein operates within protein modification; protein lipoylation via endogenous pathway; protein N(6)-(lipoyl)lysine from octanoyl-[acyl-carrier-protein]: step 1/2. Functionally, catalyzes the transfer of endogenously produced octanoic acid from octanoyl-acyl-carrier-protein onto the lipoyl domains of lipoate-dependent enzymes. Lipoyl-ACP can also act as a substrate although octanoyl-ACP is likely to be the physiological substrate. The protein is Octanoyltransferase of Vibrio cholerae serotype O1 (strain ATCC 39541 / Classical Ogawa 395 / O395).